Reading from the N-terminus, the 854-residue chain is pH-response regulator protein palA/prr-1 (854 aa).

Residues 5 to 402 (HVLSLPFRKS…SELESMTSQL (398 aa)) enclose the BRO1 domain. Residues 632 to 699 (RLDRLYESEL…DAAYYKYKEI (68 aa)) are a coiled coil. Disordered regions lie at residues 739–782 (EEEI…EPIQ) and 801–854 (PQQQ…IRFG). Over residues 746–759 (PLSSLNMHQSSFSY) the composition is skewed to polar residues. The segment covering 767–782 (QPPPPPPQIPFPEPIQ) has biased composition (pro residues). Positions 827–839 (QGQQHQQEQGQPG) are enriched in low complexity.

It belongs to the palA/RIM20 family. As to quaternary structure, interacts with pacc-1 by binding to its two YPX[LI] motifs.

Its function is as follows. Required for the proteolytic cleavage of the transcription factor pacc-1 in response to alkaline ambient pH. May act as a scaffold protein that recruits the calpain-like protease palB/cpr-8 via snf7/vps-3 to its substrate pacc-1. This chain is pH-response regulator protein palA/prr-1 (prr-1), found in Neurospora crassa (strain ATCC 24698 / 74-OR23-1A / CBS 708.71 / DSM 1257 / FGSC 987).